A 395-amino-acid chain; its full sequence is Phosphoglycerate kinase (395 aa).

Substrate contacts are provided by residues 22–24, R38, 61–64, R119, and R152; these read DFN and HLGR. Residues K203, G294, E325, and 351–354 contribute to the ATP site; that span reads GGDT.

Belongs to the phosphoglycerate kinase family. Monomer.

It localises to the cytoplasm. The catalysed reaction is (2R)-3-phosphoglycerate + ATP = (2R)-3-phospho-glyceroyl phosphate + ADP. It functions in the pathway carbohydrate degradation; glycolysis; pyruvate from D-glyceraldehyde 3-phosphate: step 2/5. This chain is Phosphoglycerate kinase, found in Hydrogenobaculum sp. (strain Y04AAS1).